A 278-amino-acid polypeptide reads, in one-letter code: SLAM family member 8 (278 aa).

Residues 1 to 20 (MWSLWSLLLFEALLPVVVVS) form the signal peptide. The Extracellular segment spans residues 21-231 (VQVLSKVGDS…AASGKASYKD (211 aa)). 2 N-linked (GlcNAc...) asparagine glycosylation sites follow: asparagine 83 and asparagine 154. Residues 126 to 213 (PEVQVFTAAA…PVSWDMTTVT (88 aa)) form the Ig-like C2-type domain. A disulfide bridge connects residues cysteine 150 and cysteine 199. Residues 232-252 (VLLVVVPITLFLILAGLFGAW) traverse the membrane as a helical segment. The Cytoplasmic segment spans residues 253–278 (HHGLCSGKKKDACTDGVLPETENALV).

The protein localises to the membrane. In terms of biological role, may play a role in B-lineage commitment and/or modulation of signaling through the B-cell receptor. The sequence is that of SLAM family member 8 (Slamf8) from Mus musculus (Mouse).